The following is a 284-amino-acid chain: 2-dehydro-3-deoxyphosphooctonate aldolase (284 aa).

Belongs to the KdsA family.

It localises to the cytoplasm. The catalysed reaction is D-arabinose 5-phosphate + phosphoenolpyruvate + H2O = 3-deoxy-alpha-D-manno-2-octulosonate-8-phosphate + phosphate. Its pathway is carbohydrate biosynthesis; 3-deoxy-D-manno-octulosonate biosynthesis; 3-deoxy-D-manno-octulosonate from D-ribulose 5-phosphate: step 2/3. It functions in the pathway bacterial outer membrane biogenesis; lipopolysaccharide biosynthesis. This chain is 2-dehydro-3-deoxyphosphooctonate aldolase, found in Erwinia tasmaniensis (strain DSM 17950 / CFBP 7177 / CIP 109463 / NCPPB 4357 / Et1/99).